The chain runs to 334 residues: Ferredoxin--NADP reductase (334 aa).

Aspartate 33, glutamine 41, tyrosine 46, alanine 86, phenylalanine 120, aspartate 286, and threonine 327 together coordinate FAD.

This sequence belongs to the ferredoxin--NADP reductase type 2 family. Homodimer. FAD is required as a cofactor.

It carries out the reaction 2 reduced [2Fe-2S]-[ferredoxin] + NADP(+) + H(+) = 2 oxidized [2Fe-2S]-[ferredoxin] + NADPH. The protein is Ferredoxin--NADP reductase of Rickettsia prowazekii (strain Madrid E).